The sequence spans 137 residues: Phosphoribosyl-AMP cyclohydrolase (137 aa).

Asp-84 contacts Mg(2+). Zn(2+) is bound at residue Cys-85. Mg(2+) is bound by residues Asp-86 and Asp-88. Zn(2+)-binding residues include Cys-101 and Cys-108.

This sequence belongs to the PRA-CH family. In terms of assembly, homodimer. Mg(2+) is required as a cofactor. Zn(2+) serves as cofactor.

The protein resides in the cytoplasm. It catalyses the reaction 1-(5-phospho-beta-D-ribosyl)-5'-AMP + H2O = 1-(5-phospho-beta-D-ribosyl)-5-[(5-phospho-beta-D-ribosylamino)methylideneamino]imidazole-4-carboxamide. The protein operates within amino-acid biosynthesis; L-histidine biosynthesis; L-histidine from 5-phospho-alpha-D-ribose 1-diphosphate: step 3/9. Catalyzes the hydrolysis of the adenine ring of phosphoribosyl-AMP. This chain is Phosphoribosyl-AMP cyclohydrolase, found in Chlorobium phaeobacteroides (strain DSM 266 / SMG 266 / 2430).